Here is a 637-residue protein sequence, read N- to C-terminus: MSDWSINDARTGYNVNYWSQGLYGISDTGEVTVSPDPSHPEYSIGLNELAKDMVKSGVALPVLIRFPQILHHRVNSVCQAFNQAIQKYEYQSDYLLVYPIKVNQQQTVVEEILASQVSKEVPQLGLEAGSKPELMAVLAMAQKASSVIICNGYKDVEYIRLALIGEKLGHKVYIVLEKLSELKIILEEAEKLGVTPRLGCRVRLAFQGKGKWQASGGEKSKFGLSASQVLTVIDSLKQSQMLDSLQLLHFHLGSQIANIRDIRQGVSEAGRFYCELQKLGANVKCFDVGGGLAVDYDGTRSQSSSSMNYGLTEYANNIVSVLTDLCNEYKEPMPRIISESGRFLTAHHAVLITDVIGTEAYKPEVIEEPETEAPQLLHNMWQSWSEVSGRADQRALIEIYHDCQSDLSEVHSLFALGQLSLSERAWAEQVNLRVCHELRDVMSPKYRFHRPIIDELNEKLADKFFVNFSLFQSLPDAWGIDQVFPIMPLSGLDKAPERRAVMLDITCDSDGTIDQYVDGQGIETTIPVPTWSAESPYLIGFFLVGAYQEILGDMHNLFGDTNSAVVRLDDDGRTNIESVLAGDTVADVLRYVNLDAVSFMRTYEELVNKHIQEAERANILEELQLGLKGYTYLEDFS.

An N6-(pyridoxal phosphate)lysine modification is found at Lys101. A substrate-binding site is contributed by 286-296 (FDVGGGLAVDY).

The protein belongs to the Orn/Lys/Arg decarboxylase class-II family. SpeA subfamily. Requires Mg(2+) as cofactor. The cofactor is pyridoxal 5'-phosphate.

The catalysed reaction is L-arginine + H(+) = agmatine + CO2. It participates in amine and polyamine biosynthesis; agmatine biosynthesis; agmatine from L-arginine: step 1/1. Its function is as follows. Catalyzes the biosynthesis of agmatine from arginine. The sequence is that of Biosynthetic arginine decarboxylase from Shewanella sediminis (strain HAW-EB3).